The following is an 89-amino-acid chain: Small ribosomal subunit protein uS15 (89 aa).

The interval 1–23 (MTLNTQEKQKLINTHQNHGTDTG) is disordered.

This sequence belongs to the universal ribosomal protein uS15 family. In terms of assembly, part of the 30S ribosomal subunit. Forms a bridge to the 50S subunit in the 70S ribosome, contacting the 23S rRNA.

One of the primary rRNA binding proteins, it binds directly to 16S rRNA where it helps nucleate assembly of the platform of the 30S subunit by binding and bridging several RNA helices of the 16S rRNA. Functionally, forms an intersubunit bridge (bridge B4) with the 23S rRNA of the 50S subunit in the ribosome. In Prochlorococcus marinus (strain MIT 9211), this protein is Small ribosomal subunit protein uS15.